The following is a 300-amino-acid chain: Ribonuclease HIII (300 aa).

Residues 86 to 300 (RPRLGVDESG…FNEICDSASA (215 aa)) form the RNase H type-2 domain. Residues Asp92, Glu93, and Asp196 each contribute to the a divalent metal cation site.

This sequence belongs to the RNase HII family. RnhC subfamily. Mn(2+) serves as cofactor. It depends on Mg(2+) as a cofactor.

Its subcellular location is the cytoplasm. It catalyses the reaction Endonucleolytic cleavage to 5'-phosphomonoester.. In terms of biological role, endonuclease that specifically degrades the RNA of RNA-DNA hybrids. This Chlamydia caviae (strain ATCC VR-813 / DSM 19441 / 03DC25 / GPIC) (Chlamydophila caviae) protein is Ribonuclease HIII.